A 507-amino-acid polypeptide reads, in one-letter code: Ribonuclease Y (507 aa).

A helical transmembrane segment spans residues 1–21; the sequence is MLWYIVAGAGGLLIGYLIASY. A KH domain is found at 197–282; the sequence is TVSTVSLPSD…EMYEKAKQEV (86 aa). The 94-residue stretch at 323 to 416 folds into the HD domain; that stretch reads VLNHSIEVAL…VAAADALSAA (94 aa).

The protein belongs to the RNase Y family.

Its subcellular location is the cell membrane. Its function is as follows. Endoribonuclease that initiates mRNA decay. The chain is Ribonuclease Y from Thermotoga petrophila (strain ATCC BAA-488 / DSM 13995 / JCM 10881 / RKU-1).